The following is a 588-amino-acid chain: Autophagy-related protein 22-1 (588 aa).

A helical transmembrane segment spans residues 35–55 (YGWAAEVFTVCAMGSFLPITL). Asn84 is a glycosylation site (N-linked (GlcNAc...) asparagine). 3 helical membrane passes run 109 to 129 (TASF…ILII), 144 to 164 (LLVS…AVTP), and 168 to 188 (LLGG…FVLL). Asn255 carries an N-linked (GlcNAc...) asparagine glycan. A run of 8 helical transmembrane segments spans residues 270–290 (GIGI…LVIV), 301–321 (LVLF…AFWL), 365–385 (ILLF…VSGT), 399–419 (AALG…AFSW), 434–454 (IIAC…GFIP), 471–493 (FPLG…SFFG), 507–527 (LYAI…GFIT), and 536–556 (AFFF…LVDA).

The protein belongs to the ATG22 family.

The protein localises to the vacuole membrane. Its function is as follows. Vacuolar effluxer which mediate the efflux of amino acids resulting from autophagic degradation. The release of autophagic amino acids allows the maintenance of protein synthesis and viability during nitrogen starvation. This chain is Autophagy-related protein 22-1 (atg22-1), found in Emericella nidulans (strain FGSC A4 / ATCC 38163 / CBS 112.46 / NRRL 194 / M139) (Aspergillus nidulans).